Here is a 213-residue protein sequence, read N- to C-terminus: ATP-dependent Clp protease proteolytic subunit (213 aa).

S114 acts as the Nucleophile in catalysis. The active site involves H139.

It belongs to the peptidase S14 family. In terms of assembly, fourteen ClpP subunits assemble into 2 heptameric rings which stack back to back to give a disk-like structure with a central cavity, resembling the structure of eukaryotic proteasomes.

It is found in the cytoplasm. The catalysed reaction is Hydrolysis of proteins to small peptides in the presence of ATP and magnesium. alpha-casein is the usual test substrate. In the absence of ATP, only oligopeptides shorter than five residues are hydrolyzed (such as succinyl-Leu-Tyr-|-NHMec, and Leu-Tyr-Leu-|-Tyr-Trp, in which cleavage of the -Tyr-|-Leu- and -Tyr-|-Trp bonds also occurs).. In terms of biological role, cleaves peptides in various proteins in a process that requires ATP hydrolysis. Has a chymotrypsin-like activity. Plays a major role in the degradation of misfolded proteins. The polypeptide is ATP-dependent Clp protease proteolytic subunit (Pseudomonas putida (strain ATCC 47054 / DSM 6125 / CFBP 8728 / NCIMB 11950 / KT2440)).